Consider the following 238-residue polypeptide: C-type lectin domain family 4 member A (238 aa).

The Cytoplasmic segment spans residues methionine 1 to threonine 48. The ITIM motif motif lies at isoleucine 5–valine 10. Residues serine 49–phenylalanine 69 traverse the membrane as a helical; Signal-anchor for type II membrane protein segment. Residues glutamine 70–leucine 238 are Extracellular-facing. N-linked (GlcNAc...) asparagine glycosylation occurs at asparagine 91. The cysteines at positions 107 and 118 are disulfide-linked. The C-type lectin domain maps to serine 126–methionine 233. N-linked (GlcNAc...) asparagine glycans are attached at residues asparagine 131 and asparagine 136. 2 disulfide bridges follow: cysteine 137-cysteine 231 and cysteine 205-cysteine 223. Residues valine 146, glutamate 152, glutamate 197, serine 199, and glutamate 203 each contribute to the Ca(2+) site. Alpha-D-mannopyranose contacts are provided by residues glutamate 197 to serine 199 and glutamate 203. Isoleucine 209–arginine 211 provides a ligand contact to N-acetyl-D-glucosamine. Residues asparagine 219 and aspartate 220 each coordinate Ca(2+).

May interact with PTPN6 via its ITIM site. As to expression, expressed in splenic antigen-presenting cells including B-cells, monocytes/macrophages, and dendritic cells (at protein level). Expressed in spleen and lymph node and slightly increased with dendritic cell maturation.

It is found in the cell membrane. May be involved in regulating immune reactivity. May play a role in modulating dendritic cells (DC) differentiation and/or maturation. May be involved in the inhibition of B-cell-receptor-mediated calcium mobilization and protein tyrosine phosphorylation. Functionally, C-type lectin receptor that binds carbohydrates mannose and fucose but also weakly interacts with N-acetylglucosamine (GlcNAc) in a Ca(2+)-dependent manner. Involved in regulating immune reactivity. Once triggered by antigen, it is internalized by clathrin-dependent endocytosis and delivers its antigenic cargo into the antigen presentation pathway resulting in cross-priming of CD8(+) T cells. This cross-presentation and cross-priming are enhanced by TLR7 and TLR8 agonists with increased expansion of the CD8(+) T cells, high production of IFNG and TNF with reduced levels of IL4, IL5 and IL13. In plasmacytoid dendritic cells, inhibits TLR9-mediated IFNA and TNF production. May be involved via its ITIM motif (immunoreceptor tyrosine-based inhibitory motifs) in the inhibition of B-cell-receptor-mediated calcium mobilization and protein tyrosine phosphorylation. The sequence is that of C-type lectin domain family 4 member A (Clec4a) from Mus musculus (Mouse).